The primary structure comprises 206 residues: Guanylate kinase (206 aa).

In terms of domain architecture, Guanylate kinase-like spans 7–185 (GIVLVLCAPS…AYDELRAAYL (179 aa)). 14–21 (APSGTGKT) lines the ATP pocket.

It belongs to the guanylate kinase family.

Its subcellular location is the cytoplasm. It carries out the reaction GMP + ATP = GDP + ADP. Essential for recycling GMP and indirectly, cGMP. The sequence is that of Guanylate kinase from Oleidesulfovibrio alaskensis (strain ATCC BAA-1058 / DSM 17464 / G20) (Desulfovibrio alaskensis).